Reading from the N-terminus, the 147-residue chain is Large ribosomal subunit protein uL15 (147 aa).

Residues 1–14 (MKLHELRPAEGAVR) are compositionally biased toward basic and acidic residues. The disordered stretch occupies residues 1 to 54 (MKLHELRPAEGAVRDRKRKGRGTASGLGKTAGRGSNGQKARSGGGVRPGFEGGQ). 2 stretches are compositionally biased toward gly residues: residues 23–35 (TASG…GRGS) and 42–52 (SGGGVRPGFEG).

This sequence belongs to the universal ribosomal protein uL15 family. As to quaternary structure, part of the 50S ribosomal subunit.

Its function is as follows. Binds to the 23S rRNA. The protein is Large ribosomal subunit protein uL15 of Alkaliphilus oremlandii (strain OhILAs) (Clostridium oremlandii (strain OhILAs)).